The primary structure comprises 229 residues: Ribonuclease T (229 aa).

The region spanning 23-197 is the Exonuclease domain; sequence VIIDVETAGF…YDTERTAKLF (175 aa). Positions 26, 28, 184, and 189 each coordinate Mg(2+). H184 (proton donor/acceptor) is an active-site residue.

This sequence belongs to the RNase T family. In terms of assembly, homodimer. It depends on Mg(2+) as a cofactor.

Functionally, trims short 3' overhangs of a variety of RNA species, leaving a one or two nucleotide 3' overhang. Responsible for the end-turnover of tRNA: specifically removes the terminal AMP residue from uncharged tRNA (tRNA-C-C-A). Also appears to be involved in tRNA biosynthesis. This Haemophilus influenzae (strain ATCC 51907 / DSM 11121 / KW20 / Rd) protein is Ribonuclease T.